Here is a 101-residue protein sequence, read N- to C-terminus: Large ribosomal subunit protein uL24 (101 aa).

This sequence belongs to the universal ribosomal protein uL24 family. As to quaternary structure, part of the 50S ribosomal subunit.

One of two assembly initiator proteins, it binds directly to the 5'-end of the 23S rRNA, where it nucleates assembly of the 50S subunit. Functionally, one of the proteins that surrounds the polypeptide exit tunnel on the outside of the subunit. In Elusimicrobium minutum (strain Pei191), this protein is Large ribosomal subunit protein uL24.